Consider the following 193-residue polypeptide: MFKNTFQSGFLSVLYSIGSKPLQIWDKKVRNGHIKRITDNDIQSLVLEIEGTNVSTTYITCPADPKKTLGIKLPFLVMIIKNLKKYFTFEVQVLDDKNVRRRFRASNYQSTTRVKPFICTMPMRLDDGWNQIQFNLSDFTRRAYGTNYIETLRVQIHANCRIRRVYFSDRLYSEDELPAEFKLYLPVQNKAKQ.

This sequence belongs to the CFAP20 family.

The protein resides in the nucleus. It is found in the cytoplasm. Its subcellular location is the cytoskeleton. The protein localises to the microtubule organizing center. It localises to the centrosome. The protein resides in the centriole. It is found in the cilium basal body. Its subcellular location is the cilium axoneme. Its function is as follows. Cilium- and flagellum-specific protein that plays a role in axonemal structure organization and motility. Microtubule inner protein (MIP) part of the dynein-decorated doublet microtubules (DMTs) in cilia axoneme, which is required for motile cilia beating. Involved in the regulation of the size and morphology of cilia. Required for axonemal microtubules polyglutamylation. This is Cilia- and flagella-associated protein 20 (CFAP20) from Gallus gallus (Chicken).